We begin with the raw amino-acid sequence, 227 residues long: Pyridoxal 5'-phosphate synthase subunit PdxT (227 aa).

Position 52–54 (52–54 (GES)) interacts with L-glutamine. Cys-84 acts as the Nucleophile in catalysis. Residues Arg-118 and 149–150 (IR) contribute to the L-glutamine site. Catalysis depends on charge relay system residues His-189 and Glu-191.

It belongs to the glutaminase PdxT/SNO family. In the presence of PdxS, forms a dodecamer of heterodimers. Only shows activity in the heterodimer.

The catalysed reaction is aldehydo-D-ribose 5-phosphate + D-glyceraldehyde 3-phosphate + L-glutamine = pyridoxal 5'-phosphate + L-glutamate + phosphate + 3 H2O + H(+). It catalyses the reaction L-glutamine + H2O = L-glutamate + NH4(+). It functions in the pathway cofactor biosynthesis; pyridoxal 5'-phosphate biosynthesis. Its function is as follows. Catalyzes the hydrolysis of glutamine to glutamate and ammonia as part of the biosynthesis of pyridoxal 5'-phosphate. The resulting ammonia molecule is channeled to the active site of PdxS. This is Pyridoxal 5'-phosphate synthase subunit PdxT from Renibacterium salmoninarum (strain ATCC 33209 / DSM 20767 / JCM 11484 / NBRC 15589 / NCIMB 2235).